The following is a 231-amino-acid chain: PIAGSMVLAAILLKLGGYGIIRMMQILPTTKTDMFLPFIVLALWGAILANLTCLQQTDLKSLIAYSSVSHMGLVAAAIIIQTPWGLSGAMALMIAHGFTSSALFCLANTTYERTHTRILILTRGFHNILPMTSTWWLLANLMNIATPPSLNFTSELLIMSTLFNWCPTTIILLGLSMLITASYSLHMFLSTQMGSTLLNSQTEPMHSREHLLMTLHLIPLMMISMKPELVI.

The next 7 membrane-spanning stretches (helical) occupy residues 1 to 21 (PIAG…YGII), 34 to 54 (MFLP…LTCL), 63 to 85 (IAYS…TPWG), 89 to 111 (AMAL…NTTY), 128 to 148 (ILPM…ATPP), 169 to 189 (TIIL…HMFL), and 211 to 231 (LLMT…ELVI).

The protein belongs to the complex I subunit 4 family.

The protein localises to the mitochondrion membrane. It catalyses the reaction a ubiquinone + NADH + 5 H(+)(in) = a ubiquinol + NAD(+) + 4 H(+)(out). Functionally, core subunit of the mitochondrial membrane respiratory chain NADH dehydrogenase (Complex I) that is believed to belong to the minimal assembly required for catalysis. Complex I functions in the transfer of electrons from NADH to the respiratory chain. The immediate electron acceptor for the enzyme is believed to be ubiquinone. This Porthidium ophryomegas (Slender hognose viper) protein is NADH-ubiquinone oxidoreductase chain 4 (MT-ND4).